Here is a 493-residue protein sequence, read N- to C-terminus: Ectonucleotide pyrophosphatase/phosphodiesterase 2 (493 aa).

At 1 to 28 (MLLFEQPVDLEKNNEDDTNIKPFAISRH) the chain is on the cytoplasmic side. Residues 29–45 (FLLKLLLCGIILIELLL) form a helical; Signal-anchor for type II membrane protein membrane-spanning segment. Residues 46–493 (YSKCPKPIDN…KTKKEKSLLQ (448 aa)) lie on the Extracellular side of the membrane. Asn-62, Asn-69, and Asn-112 each carry an N-linked (GlcNAc...) asparagine glycan. Residues 76–438 (TLTILISIDG…IGIMGTHGYN (363 aa)) form a phosphodiesterase region. The Nucleophile role is filled by Thr-127. N-linked (GlcNAc...) asparagine glycans are attached at residues Asn-153 and Asn-441.

It belongs to the nucleotide pyrophosphatase/phosphodiesterase family. Post-translationally, autophosphorylated as part of the catalytic cycle of phosphodiesterase/pyrophosphatase activity.

It localises to the membrane. It carries out the reaction Hydrolytically removes 5'-nucleotides successively from the 3'-hydroxy termini of 3'-hydroxy-terminated oligonucleotides.. The enzyme catalyses a ribonucleoside 5'-triphosphate + H2O = a ribonucleoside 5'-phosphate + diphosphate + H(+). It catalyses the reaction a 2'-deoxyribonucleoside 5'-triphosphate + H2O = a 2'-deoxyribonucleoside 5'-phosphate + diphosphate + H(+). Its function is as follows. Mediates extracellular nucleotide derived phosphate hydrolysis along with NPP1 and PHO5. This chain is Ectonucleotide pyrophosphatase/phosphodiesterase 2 (NPP2), found in Saccharomyces cerevisiae (strain ATCC 204508 / S288c) (Baker's yeast).